The primary structure comprises 122 residues: MARIAGVNIPTNKRVIIALQYIHGIGAKNAEEIVTKVGIPAERRVNQLTDQEVLQIRETIDRDYVVEGDLRREVAMNIKRLMDLGCYRGLRHRRGLPVRGQRTHTNARTRKGPAKPIAGKKK.

Residues 95–122 (GLPVRGQRTHTNARTRKGPAKPIAGKKK) are disordered.

It belongs to the universal ribosomal protein uS13 family. As to quaternary structure, part of the 30S ribosomal subunit. Forms a loose heterodimer with protein S19. Forms two bridges to the 50S subunit in the 70S ribosome.

Functionally, located at the top of the head of the 30S subunit, it contacts several helices of the 16S rRNA. In the 70S ribosome it contacts the 23S rRNA (bridge B1a) and protein L5 of the 50S subunit (bridge B1b), connecting the 2 subunits; these bridges are implicated in subunit movement. Contacts the tRNAs in the A and P-sites. The protein is Small ribosomal subunit protein uS13 of Xanthobacter autotrophicus (strain ATCC BAA-1158 / Py2).